The chain runs to 112 residues: UPF0122 protein CPF_1968 (112 aa).

Belongs to the UPF0122 family.

In terms of biological role, might take part in the signal recognition particle (SRP) pathway. This is inferred from the conservation of its genetic proximity to ftsY/ffh. May be a regulatory protein. This Clostridium perfringens (strain ATCC 13124 / DSM 756 / JCM 1290 / NCIMB 6125 / NCTC 8237 / Type A) protein is UPF0122 protein CPF_1968.